The primary structure comprises 414 residues: Arrestin domain-containing protein 3 (414 aa).

2 short sequence motifs (PPxY motif) span residues 346-349 and 391-394; these read PPSY and PPLY. Residues 393 to 414 are disordered; sequence LYSEIDPNPDQSSEDRPSCPSR. The segment covering 405 to 414 has biased composition (basic and acidic residues); sequence SEDRPSCPSR.

This sequence belongs to the arrestin family. As to quaternary structure, interacts (via PPxY motifs) with NEDD4 (via WW domains). Interacts with ADRB2. Interacts with ADRB3. Interacts with HGS (via PPxY motifs). Does not bind TXN (thioredoxin). Interacts with ITCH.

It localises to the cytoplasm. It is found in the cell membrane. Its subcellular location is the lysosome. The protein resides in the endosome. The protein localises to the early endosome. Its function is as follows. Adapter protein that plays a role in regulating cell-surface expression of adrenergic receptors and probably also other G protein-coupled receptors. Plays a role in NEDD4-mediated ubiquitination and endocytosis af activated ADRB2 and subsequent ADRB2 degradation. May recruit NEDD4 to ADRB2. Alternatively, may function as adapter protein that does not play a major role in recruiting NEDD4 to ADRB2, but rather plays a role in a targeting ADRB2 to endosomes. This Rattus norvegicus (Rat) protein is Arrestin domain-containing protein 3 (Arrdc3).